A 292-amino-acid polypeptide reads, in one-letter code: MSERRLLLVHAHPDDETLTTGGTIARYAADGADVHVLTCTLGEEGEVIGDEWAHLVAGAADQLGGFRIGELTSALSSLGAGRPRFLLGAGRFRDSGMAGTASAANPRAFVNADPDAVTAAIVAVIRDVRPHVVVTYDPDGGYGHPDHIQAHRIVTAAVEAAGTERFPDAGVPWDVAKLYWTVTEASALEAGLCRIGDLPDGWRLPEPGELPSVPDGDVTTVIDVRGVLDAKRNALSAHATQVTVAPSGTEYALSNDIAQPILVEEHFVLVRGALGDRDADGREWDLFAGVGH.

Zn(2+) is bound by residues His12, Asp15, and His147.

It belongs to the MshB deacetylase family. Zn(2+) is required as a cofactor.

The catalysed reaction is 1D-myo-inositol 2-acetamido-2-deoxy-alpha-D-glucopyranoside + H2O = 1D-myo-inositol 2-amino-2-deoxy-alpha-D-glucopyranoside + acetate. Catalyzes the deacetylation of 1D-myo-inositol 2-acetamido-2-deoxy-alpha-D-glucopyranoside (GlcNAc-Ins) in the mycothiol biosynthesis pathway. The sequence is that of 1D-myo-inositol 2-acetamido-2-deoxy-alpha-D-glucopyranoside deacetylase from Rhodococcus opacus (strain B4).